A 39-amino-acid polypeptide reads, in one-letter code: Potassium channel toxin alpha-KTx 31.1 (39 aa).

Disulfide bonds link Cys-7–Cys-30, Cys-13–Cys-35, and Cys-17–Cys-37.

The protein belongs to the short scorpion toxin superfamily. Potassium channel inhibitor family. Alpha-KTx 31 subfamily. As to expression, expressed by the venom gland.

The protein localises to the secreted. In terms of biological role, voltage-gated potassium channel inhibitor. 1 uM of the native toxin inhibits rat Kv1.2/KCNA2 (100% inhibition), and drosophila Shaker IR/Sh (100%), human Kv1.3/KCNA3 (83%), rat Kv1.1/KCNA1 (32%) and rat Kv1.6/KCNA6 (21%). The polypeptide is Potassium channel toxin alpha-KTx 31.1 (Buthus occitanus tunetanus (Common European scorpion)).